Here is a 236-residue protein sequence, read N- to C-terminus: SERTA domain-containing protein 1 (236 aa).

Positions 38-85 (PTVASSSLFDLSVVKLHHSLRQSEPDLRHLVLVVNTLRRIQASMEPAP) constitute an SERTA domain. The interval 190 to 211 (ASEGLKPGPENGPAKEEPPELD) is disordered.

As to quaternary structure, interacts with the PHD-bromodomain of TIF1, TRIM28/TIF1B and p300/CBP. Interacts with E2F1 and TFDP1; modulates transactivation activity of TFDP1/E2F complexes. Also interacts with CDK4. In terms of processing, polyubiquitinated, which promotes proteasomal degradation. In terms of tissue distribution, detected at in testis, lung and, at lower levels, in muscle, liver, spleen, brain and heart.

Its function is as follows. Acts at E2F-responsive promoters as coregulator to integrate signals provided by PHD- and/or bromodomain-containing transcription factors. Stimulates E2F1/TFDP1 transcriptional activity. Renders the activity of cyclin D1/CDK4 resistant to the inhibitory effects of CDKN2A/p16INK4A. The protein is SERTA domain-containing protein 1 (Sertad1) of Mus musculus (Mouse).